The chain runs to 471 residues: Cysteine--tRNA ligase (471 aa).

Cys-29 contributes to the Zn(2+) binding site. Residues 31–41 (LTVQSEPHVGH) carry the 'HIGH' region motif. The Zn(2+) site is built by Cys-215, His-240, and Glu-244. Positions 271–275 (KMSKS) match the 'KMSKS' region motif. Lys-274 contacts ATP.

This sequence belongs to the class-I aminoacyl-tRNA synthetase family. As to quaternary structure, monomer. The cofactor is Zn(2+).

It is found in the cytoplasm. The catalysed reaction is tRNA(Cys) + L-cysteine + ATP = L-cysteinyl-tRNA(Cys) + AMP + diphosphate. In Nocardioides sp. (strain ATCC BAA-499 / JS614), this protein is Cysteine--tRNA ligase.